The primary structure comprises 1434 residues: Probable deoxyribonuclease RhsA (1434 aa).

The disordered stretch occupies residues 14–42; the sequence is AMHAGNRPNPPDDRPQPCRGKPPTSPGKT. 2 helical membrane-spanning segments follow: residues 48-68 and 70-90; these read FLGALAGAVAGALVAAAVAAA and VFLVGVTGGLAVAAVGALAVF. 3 YD repeats span residues 486–521, 592–628, and 847–876; these read YDAAHRLTRWHDNDQTWARYEYDAQGRCVYTTCADG, DDTGRVSTFTDASGHQWQYDYDAAQRLCGVTDPLGRE, and YDARGLLLRETAPDDTLHYRYDAVGRLTEV.

It belongs to the RHS/WapA nuclease family.

It is found in the membrane. Toxic component of a toxin-immunity protein module, which functions as a cellular contact-dependent growth inhibition (CDI) system. This protein may be a nuclease that is specifically inhibited by its cognate immunity protein RhsAI. Upon expression of the C-terminus (residues 1284-1434) in E.coli growth is inhibited, cells elongate, nucleoids condense and plasmid DNA is degraded; these effects are blocked specifically by cognate immunity protein RshIA. Cell contact is necessary for growth inhibition. This is Probable deoxyribonuclease RhsA (rhsA) from Dickeya dadantii (strain 3937) (Erwinia chrysanthemi (strain 3937)).